A 786-amino-acid chain; its full sequence is Endonuclease MutS2 (786 aa).

Position 335 to 342 (335 to 342 (GPNTGGKT)) interacts with ATP. In terms of domain architecture, Smr spans 711 to 786 (LDLRGERFEN…GLGVTVVELK (76 aa)).

Belongs to the DNA mismatch repair MutS family. MutS2 subfamily. As to quaternary structure, homodimer. Binds to stalled ribosomes, contacting rRNA.

Functionally, endonuclease that is involved in the suppression of homologous recombination and thus may have a key role in the control of bacterial genetic diversity. In terms of biological role, acts as a ribosome collision sensor, splitting the ribosome into its 2 subunits. Detects stalled/collided 70S ribosomes which it binds and splits by an ATP-hydrolysis driven conformational change. Acts upstream of the ribosome quality control system (RQC), a ribosome-associated complex that mediates the extraction of incompletely synthesized nascent chains from stalled ribosomes and their subsequent degradation. Probably generates substrates for RQC. The protein is Endonuclease MutS2 of Bacillus cereus (strain ATCC 10987 / NRS 248).